A 366-amino-acid chain; its full sequence is Spermine synthase (366 aa).

A2 bears the N-acetylalanine mark. S57 is modified (phosphoserine). Residues 122–362 (RYWPTADGRL…ELWVFYTVWK (241 aa)) enclose the PABS domain. An S-adenosyl 3-(methylsulfanyl)propylamine-binding site is contributed by Q148. Residues Y177 and D201 each contribute to the spermidine site. S-adenosyl 3-(methylsulfanyl)propylamine-binding positions include E220 and 255-256 (DC). Catalysis depends on D276, which acts as the Proton acceptor. Spermidine-binding residues include Y351 and E353.

Belongs to the spermidine/spermine synthase family. In terms of assembly, homodimer. Dimerization is mediated through the N-terminal domain and seems to be required for activity as deletion of the N-terminal domain causes complete loss of activity.

The catalysed reaction is S-adenosyl 3-(methylsulfanyl)propylamine + spermidine = spermine + S-methyl-5'-thioadenosine + H(+). It participates in amine and polyamine biosynthesis; spermine biosynthesis; spermine from spermidine: step 1/1. Functionally, catalyzes the production of spermine from spermidine and decarboxylated S-adenosylmethionine (dcSAM). Required for normal viability, growth and fertility. This Mus musculus (Mouse) protein is Spermine synthase (Sms).